Consider the following 641-residue polypeptide: Probable potassium transport system protein Kup (641 aa).

Transmembrane regions (helical) follow at residues 29-49 (ISLA…LYAI), 66-86 (ILGV…LKYL), 119-139 (WVLV…AMIT), 156-176 (PAFA…LFLF), 185-205 (GALF…LGII), 231-251 (LHGF…EALY), 266-286 (WVLF…AFLL), 298-318 (ALVP…ATVI), 356-376 (IYVP…VLGF), 384-404 (AAYG…FFFV), 415-435 (VLWA…GASM), and 438-458 (LFHG…LMNT).

This sequence belongs to the HAK/KUP transporter (TC 2.A.72) family.

The protein resides in the cell inner membrane. The catalysed reaction is K(+)(in) + H(+)(in) = K(+)(out) + H(+)(out). Transport of potassium into the cell. Likely operates as a K(+):H(+) symporter. This chain is Probable potassium transport system protein Kup, found in Chlorobium phaeovibrioides (strain DSM 265 / 1930) (Prosthecochloris vibrioformis (strain DSM 265)).